The chain runs to 250 residues: ADPR responsive transcriptional repressor NtrR (250 aa).

The Nudix hydrolase domain maps to 26–157 (LMTVDMAIFS…DHHDLLQQAF (132 aa)). The Nudix box motif lies at 62 to 85 (GFVDLEQDQNLMACAHRKLLEKTG). The interval 164–237 (TRYTALPISL…RFALQDYDFN (74 aa)) is winged helix-like DNA-binding region.

DNA binding is efficiently suppressed in the presence of ADP-ribose (ADPR) or phospho-ADPR. Accumulation of ADPR resulting from NAD degradation may be interpreted by the cell as a signal to activate recycling of nicotinamide. Its function is as follows. Involved in the transcriptional regulation of the nondeamidating salvage pathway for production of NAD from nicotinamide. Represses expression of the prs-nadV-nrtR operon by binding to the DNA region located upstream of the operon, thus blocking the nondeamidating pathway. The sequence is that of ADPR responsive transcriptional repressor NtrR from Acinetobacter baylyi (strain ATCC 33305 / BD413 / ADP1).